Here is a 259-residue protein sequence, read N- to C-terminus: Bis(5'-nucleosyl)-tetraphosphatase, symmetrical (259 aa).

It belongs to the Ap4A hydrolase family.

It catalyses the reaction P(1),P(4)-bis(5'-adenosyl) tetraphosphate + H2O = 2 ADP + 2 H(+). Its function is as follows. Hydrolyzes diadenosine 5',5'''-P1,P4-tetraphosphate to yield ADP. The sequence is that of Bis(5'-nucleosyl)-tetraphosphatase, symmetrical (apaH) from Klebsiella aerogenes (Enterobacter aerogenes).